The sequence spans 265 residues: 5'-nucleotidase SurE (265 aa).

Residues Asp11, Asp12, Ser43, and Asn101 each contribute to the a divalent metal cation site.

This sequence belongs to the SurE nucleotidase family. A divalent metal cation serves as cofactor.

The protein resides in the cytoplasm. The enzyme catalyses a ribonucleoside 5'-phosphate + H2O = a ribonucleoside + phosphate. Nucleotidase that shows phosphatase activity on nucleoside 5'-monophosphates. This is 5'-nucleotidase SurE from Synechococcus sp. (strain CC9311).